Here is a 370-residue protein sequence, read N- to C-terminus: Chaperone protein DnaJ (370 aa).

In terms of domain architecture, J spans D7–G73. The CR-type zinc finger occupies G144–R226. C157, C160, C174, C177, C200, C203, C214, and C217 together coordinate Zn(2+). CXXCXGXG motif repeat units follow at residues C157–G164, C174–G181, C200–G207, and C214–G221.

Belongs to the DnaJ family. As to quaternary structure, homodimer. It depends on Zn(2+) as a cofactor.

The protein resides in the cytoplasm. In terms of biological role, participates actively in the response to hyperosmotic and heat shock by preventing the aggregation of stress-denatured proteins and by disaggregating proteins, also in an autonomous, DnaK-independent fashion. Unfolded proteins bind initially to DnaJ; upon interaction with the DnaJ-bound protein, DnaK hydrolyzes its bound ATP, resulting in the formation of a stable complex. GrpE releases ADP from DnaK; ATP binding to DnaK triggers the release of the substrate protein, thus completing the reaction cycle. Several rounds of ATP-dependent interactions between DnaJ, DnaK and GrpE are required for fully efficient folding. Also involved, together with DnaK and GrpE, in the DNA replication of plasmids through activation of initiation proteins. This chain is Chaperone protein DnaJ, found in Thermotoga neapolitana (strain ATCC 49049 / DSM 4359 / NBRC 107923 / NS-E).